The primary structure comprises 308 residues: L-lactate dehydrogenase 2 (308 aa).

Residues Val-13, Asp-34, Arg-39, Tyr-64, and 78–79 (GV) each bind NAD(+). Arg-87 is a substrate binding site. Thr-100 contributes to the NAD(+) binding site. 119–122 (NPVD) serves as a coordination point for substrate. Thr-142 is a binding site for NAD(+). Residue 147–150 (DSMR) participates in substrate binding. The active-site Proton acceptor is His-174. Thr-224 is a substrate binding site.

It belongs to the LDH/MDH superfamily. LDH family. In terms of assembly, homotetramer.

The protein resides in the cytoplasm. The catalysed reaction is (S)-lactate + NAD(+) = pyruvate + NADH + H(+). It functions in the pathway fermentation; pyruvate fermentation to lactate; (S)-lactate from pyruvate: step 1/1. Catalyzes the conversion of lactate to pyruvate. This is L-lactate dehydrogenase 2 from Lactobacillus acidophilus (strain ATCC 700396 / NCK56 / N2 / NCFM).